A 366-amino-acid chain; its full sequence is Endogenous Bornavirus-like nucleoprotein 1 (366 aa).

Residues 1-15 (MSRPRNNPQTSSPQD) show a composition bias toward polar residues. The segment at 1-22 (MSRPRNNPQTSSPQDSTKDGSS) is disordered.

In terms of tissue distribution, expression detected by RT-PCR in a few cell lines, including OL, HEK293T and MOLT-4. Not observed in HeLa cells.

Its function is as follows. May act as an RNA-binding protein. Highly homologous to the bornavirus nucleocapsid N protein that binds viral RNA and oligomerizes. This chain is Endogenous Bornavirus-like nucleoprotein 1 (EBLN1), found in Homo sapiens (Human).